A 514-amino-acid chain; its full sequence is 2,3-bisphosphoglycerate-independent phosphoglycerate mutase (514 aa).

Mn(2+) is bound by residues Asp14 and Ser64. The active-site Phosphoserine intermediate is Ser64. Substrate-binding positions include His125, 155-156 (RD), Arg187, Arg193, 263-266 (RADR), and Lys336. Residues Asp403, His407, Asp444, His445, and His463 each contribute to the Mn(2+) site.

It belongs to the BPG-independent phosphoglycerate mutase family. In terms of assembly, monomer. The cofactor is Mn(2+).

It carries out the reaction (2R)-2-phosphoglycerate = (2R)-3-phosphoglycerate. Its pathway is carbohydrate degradation; glycolysis; pyruvate from D-glyceraldehyde 3-phosphate: step 3/5. Its function is as follows. Catalyzes the interconversion of 2-phosphoglycerate and 3-phosphoglycerate. In Shewanella baltica (strain OS195), this protein is 2,3-bisphosphoglycerate-independent phosphoglycerate mutase.